The sequence spans 103 residues: Large ribosomal subunit protein bL21 (103 aa).

It belongs to the bacterial ribosomal protein bL21 family. In terms of assembly, part of the 50S ribosomal subunit. Contacts protein L20.

This protein binds to 23S rRNA in the presence of protein L20. In Shewanella frigidimarina (strain NCIMB 400), this protein is Large ribosomal subunit protein bL21.